The primary structure comprises 202 residues: Small ribosomal subunit protein uS4c (202 aa).

Positions 1 to 13 (MSRYRGPRMKMIR) are enriched in basic residues. Residues 1-41 (MSRYRGPRMKMIRRPGTLPGLTSKTPGTKVGSSDRSTSSKK) are disordered. Low complexity predominate over residues 29–41 (KVGSSDRSTSSKK). The S4 RNA-binding domain maps to 90–153 (MRLDNTIFRL…KCRLVDRRDM (64 aa)).

This sequence belongs to the universal ribosomal protein uS4 family. As to quaternary structure, part of the 30S ribosomal subunit. Contacts protein S5. The interaction surface between S4 and S5 is involved in control of translational fidelity.

Its subcellular location is the plastid. Its function is as follows. One of the primary rRNA binding proteins, it binds directly to 16S rRNA where it nucleates assembly of the body of the 30S subunit. In terms of biological role, with S5 and S12 plays an important role in translational accuracy. This Aneura mirabilis (Parasitic liverwort) protein is Small ribosomal subunit protein uS4c (rps4).